A 356-amino-acid polypeptide reads, in one-letter code: DNA polymerase IV (356 aa).

Positions 6 to 187 constitute a UmuC domain; it reads IIHIDMDYFF…LDIGDFPGVG (182 aa). Residues Asp10 and Asp105 each coordinate Mg(2+). Glu106 is a catalytic residue.

Belongs to the DNA polymerase type-Y family. As to quaternary structure, monomer. Mg(2+) serves as cofactor.

It is found in the cytoplasm. The enzyme catalyses DNA(n) + a 2'-deoxyribonucleoside 5'-triphosphate = DNA(n+1) + diphosphate. Poorly processive, error-prone DNA polymerase involved in untargeted mutagenesis. Copies undamaged DNA at stalled replication forks, which arise in vivo from mismatched or misaligned primer ends. These misaligned primers can be extended by PolIV. Exhibits no 3'-5' exonuclease (proofreading) activity. May be involved in translesional synthesis, in conjunction with the beta clamp from PolIII. In Staphylococcus aureus (strain JH1), this protein is DNA polymerase IV.